The chain runs to 197 residues: MSGKLGDDALDILFRDARTHNGWKAEPVSDETLRALYDLMKWGPTSANCSPARIIFVKSKEAKEKLAPALSEGNLKKTMAAPVTAIIGYDVEFYERLPELFPHDPTAKNWFNWSKEWAEQTAFRNGSLQGAYFMIAARSLGLDCGPMSGFDMRKVDDAFFAGTTVKVNFLCNIGHGDPSALFARSPRLSFEDACKII.

This sequence belongs to the nitroreductase family. HadB/RutE subfamily. The cofactor is FMN.

This Parvibaculum lavamentivorans (strain DS-1 / DSM 13023 / NCIMB 13966) protein is Putative NADH dehydrogenase/NAD(P)H nitroreductase Plav_3612.